We begin with the raw amino-acid sequence, 591 residues long: Aspartate--tRNA(Asp/Asn) ligase (591 aa).

Glu174 contributes to the L-aspartate binding site. The aspartate stretch occupies residues 198–201 (QLFK). Arg220 provides a ligand contact to L-aspartate. ATP contacts are provided by residues 220–222 (RDE) and Gln229. His450 contacts L-aspartate. Glu483 lines the ATP pocket. An L-aspartate-binding site is contributed by Arg490. Residue 535-538 (GLDR) participates in ATP binding.

This sequence belongs to the class-II aminoacyl-tRNA synthetase family. Type 1 subfamily. In terms of assembly, homodimer.

It is found in the cytoplasm. It catalyses the reaction tRNA(Asx) + L-aspartate + ATP = L-aspartyl-tRNA(Asx) + AMP + diphosphate. Functionally, aspartyl-tRNA synthetase with relaxed tRNA specificity since it is able to aspartylate not only its cognate tRNA(Asp) but also tRNA(Asn). Reaction proceeds in two steps: L-aspartate is first activated by ATP to form Asp-AMP and then transferred to the acceptor end of tRNA(Asp/Asn). The sequence is that of Aspartate--tRNA(Asp/Asn) ligase from Pseudomonas fluorescens (strain ATCC BAA-477 / NRRL B-23932 / Pf-5).